A 352-amino-acid chain; its full sequence is MDDNKAKALKAALAQIEKQFGKNTIMHLGDDSAALDVDVVSTGSLGLDIALGIGGLPKGRIVEIYGPESSGKTTMTLQAIAECQKQGGVCAFIDAEHALDPVYARKLGVNTDDLLLSQPDNGEQALEITDMLVRSGAIDMIVIDSVAALTPRAEIEGEMGDSHMGLQARLMSQALRKITGNAKRSNCMVLFINQIRMKIGVMFGSPETTTGGNALKFYASVRMDIRRIGAVKNGDEIIGNQTRVKVIKNKMAPPFRQAEFEITYGEGTNHLAEVIDLGVEIGAVGKAGSWYSYGDEKIGQGKANSVLFLKENPAIAEEIEAKIRAEKLGVKDDSKAAVVAETNEELASEPVQ.

66–73 (GPESSGKT) is an ATP binding site.

It belongs to the RecA family.

Its subcellular location is the cytoplasm. Functionally, can catalyze the hydrolysis of ATP in the presence of single-stranded DNA, the ATP-dependent uptake of single-stranded DNA by duplex DNA, and the ATP-dependent hybridization of homologous single-stranded DNAs. It interacts with LexA causing its activation and leading to its autocatalytic cleavage. This Psychrobacter arcticus (strain DSM 17307 / VKM B-2377 / 273-4) protein is Protein RecA.